The following is a 228-amino-acid chain: ATP-dependent dethiobiotin synthetase BioD (228 aa).

Residue 13–18 (DVGKTV) coordinates ATP. T17 contacts Mg(2+). The active site involves K38. ATP contacts are provided by residues D55, 116–119 (EGAG), 176–177 (NR), and 205–207 (PYI). Mg(2+) contacts are provided by D55 and E116.

The protein belongs to the dethiobiotin synthetase family. As to quaternary structure, homodimer. Mg(2+) is required as a cofactor.

It localises to the cytoplasm. The enzyme catalyses (7R,8S)-7,8-diammoniononanoate + CO2 + ATP = (4R,5S)-dethiobiotin + ADP + phosphate + 3 H(+). Its pathway is cofactor biosynthesis; biotin biosynthesis; biotin from 7,8-diaminononanoate: step 1/2. In terms of biological role, catalyzes a mechanistically unusual reaction, the ATP-dependent insertion of CO2 between the N7 and N8 nitrogen atoms of 7,8-diaminopelargonic acid (DAPA, also called 7,8-diammoniononanoate) to form a ureido ring. This is ATP-dependent dethiobiotin synthetase BioD from Vibrio parahaemolyticus serotype O3:K6 (strain RIMD 2210633).